The primary structure comprises 156 residues: Protein archease-like (156 aa).

Positions 25, 155, and 156 each coordinate Ca(2+).

The protein belongs to the archease family.

Functionally, component of the tRNA-splicing ligase complex required to facilitate the enzymatic turnover of catalytic subunit RtcB. Plays an important role in a RNA repair and splicing pathway which controls axon regeneration in response to peripheral (PNS) and central nervous system (CNS) injury, by activating splicing of Xbp1 to promote axon regeneration in response to axotomy. The protein is Protein archease-like of Drosophila melanogaster (Fruit fly).